A 382-amino-acid polypeptide reads, in one-letter code: Alcohol dehydrogenase 4 (382 aa).

It belongs to the iron-containing alcohol dehydrogenase family. In terms of assembly, homodimer. It depends on Zn(2+) as a cofactor. The cofactor is Fe(2+).

The protein resides in the mitochondrion. It catalyses the reaction a primary alcohol + NAD(+) = an aldehyde + NADH + H(+). The catalysed reaction is a secondary alcohol + NAD(+) = a ketone + NADH + H(+). Inhibited by EDTA. Reduces acetaldehyde to ethanol during glucose fermentation. Specific for ethanol. Shows drastically reduced activity towards primary alcohols from 4 carbon atoms upward. Isomers of aliphatic alcohol, as well as secondary alcohols and glycerol are not used at all. The sequence is that of Alcohol dehydrogenase 4 (ADH4) from Saccharomyces cerevisiae (strain YJM789) (Baker's yeast).